We begin with the raw amino-acid sequence, 332 residues long: Cilia- and flagella-associated protein 119 (332 aa).

Positions 1 to 10 (MITPRSSQSL) are enriched in polar residues. Disordered regions lie at residues 1–70 (MITP…ANLF), 246–271 (EDEEATVEQAATPQEEEPEAVTEAEQ), and 308–332 (RLSNRLAALERPYQTPPSKGKSKAK). The span at 14 to 30 (VQTELEHSPKLQEEPDR) shows a compositional bias: basic and acidic residues. Residues 49 to 58 (ESPAEATSSP) are compositionally biased toward polar residues. Residues 287–308 (LNKELRQLQQLVEERLKESEER) adopt a coiled-coil conformation.

Specifically expressed in testis (at protein level).

The protein resides in the cell projection. The protein localises to the cilium. It localises to the flagellum. Its subcellular location is the cytoplasmic vesicle. It is found in the secretory vesicle. The protein resides in the acrosome. The protein localises to the cytoplasm. This Rattus norvegicus (Rat) protein is Cilia- and flagella-associated protein 119.